A 387-amino-acid polypeptide reads, in one-letter code: Ferrochelatase (387 aa).

Fe cation-binding residues include His-196 and Glu-277.

Belongs to the ferrochelatase family.

Its subcellular location is the cytoplasm. It carries out the reaction heme b + 2 H(+) = protoporphyrin IX + Fe(2+). It functions in the pathway porphyrin-containing compound metabolism; protoheme biosynthesis; protoheme from protoporphyrin-IX: step 1/1. Functionally, catalyzes the ferrous insertion into protoporphyrin IX. This is Ferrochelatase from Cyanothece sp. (strain PCC 7425 / ATCC 29141).